The chain runs to 255 residues: tRNA pseudouridine synthase A (255 aa).

Residue Asp-43 is the Nucleophile of the active site. Tyr-94 serves as a coordination point for substrate.

It belongs to the tRNA pseudouridine synthase TruA family.

It carries out the reaction uridine(38/39/40) in tRNA = pseudouridine(38/39/40) in tRNA. Its function is as follows. Formation of pseudouridine at positions 38, 39 and 40 in the anticodon stem and loop of transfer RNAs. This Pyrobaculum islandicum (strain DSM 4184 / JCM 9189 / GEO3) protein is tRNA pseudouridine synthase A.